We begin with the raw amino-acid sequence, 142 residues long: Large ribosomal subunit protein uL11 (142 aa).

The protein belongs to the universal ribosomal protein uL11 family. Part of the ribosomal stalk of the 50S ribosomal subunit. Interacts with L10 and the large rRNA to form the base of the stalk. L10 forms an elongated spine to which L12 dimers bind in a sequential fashion forming a multimeric L10(L12)X complex. One or more lysine residues are methylated.

Functionally, forms part of the ribosomal stalk which helps the ribosome interact with GTP-bound translation factors. In Hamiltonella defensa subsp. Acyrthosiphon pisum (strain 5AT), this protein is Large ribosomal subunit protein uL11.